A 236-amino-acid chain; its full sequence is MESTDVNHSTAWAPGGMAHIISEAVIAGSIGLYFWKKISALEQTVQELQSQLEVQNNQLQWLIQQQTRRLAVSPLAVSPLAVSPLPPQRDYRQQSTTTNAAGNNGAYPSFQFKPPKTAIKGDAAPPQATPKMQCDNGVCKLVRPLQATHGKGARAPSPEKKTVSISKIAKQIEFEHDQIAPARTATTQVSTFSKPSPNPVLRSITPNPSIGEGRDGDESGPSARALDKILNDIDCE.

A helical transmembrane segment spans residues 15-34 (GGMAHIISEAVIAGSIGLYF). Residues 36–71 (KKISALEQTVQELQSQLEVQNNQLQWLIQQQTRRLA) adopt a coiled-coil conformation. 2 disordered regions span residues 83–113 (SPLP…FQFK) and 185–236 (ATTQ…IDCE). Polar residues-rich tracts occupy residues 93-102 (QQSTTTNAAG) and 185-195 (ATTQVSTFSKP). The segment covering 225–236 (ALDKILNDIDCE) has biased composition (basic and acidic residues).

The protein localises to the membrane. This is an uncharacterized protein from Aedes vexans (Inland floodwater mosquito).